Here is a 155-residue protein sequence, read N- to C-terminus: MPINQKFYSYLVKRNGGEGEPEFRLPMGFIGITLFEIGILLFGWTARYKIFWFVPTIGSAIMGGGYIMTSNPLNMYVVDSYGIYSASASAGVKIFQLLLGAIFPLFAESLFRRLNYGWGCTLLAFILLACGCSLPILFKYGKQIRNLRPFDPSKY.

Transmembrane regions (helical) follow at residues 25–45 (LPMG…FGWT), 50–70 (IFWF…IMTS), 91–111 (GVKI…ESLF), and 118–138 (WGCT…PILF).

It belongs to the major facilitator superfamily. CAR1 family.

It localises to the membrane. This is an uncharacterized protein from Schizosaccharomyces pombe (strain 972 / ATCC 24843) (Fission yeast).